Consider the following 159-residue polypeptide: Neuroglobin-2 (159 aa).

Residues 3–151 (KLTEKDKELI…VVAAMSRGWA (149 aa)) form the Globin domain. Positions 66 and 98 each coordinate heme b.

This sequence belongs to the globin family. As to quaternary structure, monomer. Homodimers and homotetramers. Mainly monomeric but also detected as part of homodimers and homotetramers.

The protein resides in the cytoplasm. It localises to the cytosol. It is found in the mitochondrion matrix. It catalyses the reaction Fe(III)-heme b-[protein] + nitric oxide + H2O = Fe(II)-heme b-[protein] + nitrite + 2 H(+). Functionally, monomeric globin with a bis-histidyl six-coordinate heme-iron atom through which it can bind dioxygen, carbon monoxide and nitric oxide. Could help transport oxygen and increase its availability to the metabolically active neuronal tissues, though its low quantity in tissues as well as its high affinity for dioxygen, which may limit its oxygen-releasing ability, argue against it. The ferrous/deoxygenated form exhibits a nitrite reductase activity and it could produce nitric oxide which in turn inhibits cellular respiration in response to hypoxia. In its ferrous/deoxygenated state, it may also exhibit GDI (Guanine nucleotide Dissociation Inhibitor) activity toward heterotrimeric G-alpha proteins, thereby regulating signal transduction to facilitate neuroprotective responses in the wake of hypoxia and associated oxidative stress. In Oncorhynchus mykiss (Rainbow trout), this protein is Neuroglobin-2 (ngb2).